The primary structure comprises 383 residues: Agmatine deiminase (383 aa).

Agmatine is bound by residues aspartate 220 and aspartate 226. Catalysis depends on cysteine 366, which acts as the Amidino-cysteine intermediate.

This sequence belongs to the agmatine deiminase family. Forms homodimers.

The catalysed reaction is agmatine + H2O = N-carbamoylputrescine + NH4(+). Its pathway is amine and polyamine biosynthesis; putrescine biosynthesis via agmatine pathway; N-carbamoylputrescine from agmatine: step 1/1. With respect to regulation, inhibited by N-ethylmaleimide and iodoacetamide. In terms of biological role, mediates the hydrolysis of agmatine into N-carbamoylputrescine in the arginine decarboxylase (ADC) pathway of putrescine biosynthesis, a basic polyamine. This chain is Agmatine deiminase (AIH), found in Arabidopsis thaliana (Mouse-ear cress).